We begin with the raw amino-acid sequence, 191 residues long: Pyridoxal 5'-phosphate synthase subunit PdxT (191 aa).

48-50 provides a ligand contact to L-glutamine; sequence GES. Cys79 serves as the catalytic Nucleophile. Residues Arg106 and 134–135 each bind L-glutamine; that span reads IR. Catalysis depends on charge relay system residues His170 and Glu172.

The protein belongs to the glutaminase PdxT/SNO family. In terms of assembly, in the presence of PdxS, forms a dodecamer of heterodimers. Only shows activity in the heterodimer.

It catalyses the reaction aldehydo-D-ribose 5-phosphate + D-glyceraldehyde 3-phosphate + L-glutamine = pyridoxal 5'-phosphate + L-glutamate + phosphate + 3 H2O + H(+). It carries out the reaction L-glutamine + H2O = L-glutamate + NH4(+). The protein operates within cofactor biosynthesis; pyridoxal 5'-phosphate biosynthesis. Catalyzes the hydrolysis of glutamine to glutamate and ammonia as part of the biosynthesis of pyridoxal 5'-phosphate. The resulting ammonia molecule is channeled to the active site of PdxS. The polypeptide is Pyridoxal 5'-phosphate synthase subunit PdxT (Oenococcus oeni (strain ATCC BAA-331 / PSU-1)).